We begin with the raw amino-acid sequence, 227 residues long: Terpene cyclase ltmB (227 aa).

7 consecutive transmembrane segments (helical) span residues 20–40, 51–71, 76–96, 113–133, 135–155, 173–195, and 206–226; these read LAET…VLMI, MALI…IIYP, VELA…TSAA, AGLI…ALAM, IGPA…LSIG, LWSS…WRYW, and LILW…VCLL.

It belongs to the paxB family.

The protein localises to the membrane. It participates in secondary metabolite biosynthesis. Terpene cyclase; part of the gene cluster that mediates the biosynthesis of lolitrems, indole-diterpene mycotoxins that are potent tremorgens in mammals, and are synthesized by clavicipitaceous fungal endophytes in association with their grass hosts. The geranylgeranyl diphosphate (GGPP) synthase ltmG is proposed to catalyze the first step in lolitrem biosynthesis. LtmG catalyzes a series of iterative condensations of isopentenyl diphosphate (IPP) with dimethylallyl diphosphate (DMAPP), geranyl diphosphate (GPP), and farnesyl diphosphate (FPP), to form GGPP. GGPP then condenses with indole-3-glycerol phosphate to form 3-geranylgeranylindole, an acyclic intermediate, to be incorporated into paxilline. Either ltmG or ltmC could be responsible for this step, as both are putative prenyl transferases. The FAD-dependent monooxygenase ltmM then catalyzes the epoxidation of the two terminal alkenes of the geranylgeranyl moiety, which is subsequently cyclized by ltmB, to paspaline. The cytochrome P450 monooxygenases ltmQ and ltmP can sequentially oxidize paspaline to terpendole E and terpendole F. Alternatively, ltmP converts paspaline to an intermediate which is oxidized by ltmQ to terpendole F. LtmF, ltmK, ltmE and ltmJ appear to be unique to the epichloe endophytes. The prenyltransferase ltmF is involved in the 27-hydroxyl-O-prenylation. The cytochrome P450 monooxygenase ltmK is required for the oxidative acetal ring formation. The multi-functional prenyltransferase ltmE is required for C20- and C21-prenylations of the indole ring of paspalanes and acts together with the cytochrome P450 monooxygenase ltmJ to yield lolitremanes by multiple oxidations and ring closures. The stereoisomer pairs of lolitriol and lolitrem N or lolitrem B and lolitrem F may be attributed to variations in the way in which ring closure can occur under the action of ltmJ. While the major product of this pathway is lolitrem B, the prenyl transferases and cytochrome P450 monooxygenases identified in this pathway have a remarkable versatility in their regio- and stereo-specificities to generate a diverse range of metabolites that are products of a metabolic grid rather than a linear pathway. This is Terpene cyclase ltmB from Epichloe festucae var. lolii (Neotyphodium lolii).